A 457-amino-acid chain; its full sequence is Fibrinogen C domain-containing protein 1 (457 aa).

The interval 1-20 is disordered; the sequence is MGSDRWKNIGGAPQMEDSVQ. Residues 1 to 33 are Cytoplasmic-facing; the sequence is MGSDRWKNIGGAPQMEDSVQDKSQRKGCGYILC. Residues 34–54 traverse the membrane as a helical; Signal-anchor for type II membrane protein segment; the sequence is TVLLSVAVLLAVTVTGAVLFM. The Extracellular portion of the chain corresponds to 55–457; it reads NHYHAPSTEP…MKIRPQREEN (403 aa). The interval 211–235 is disordered; sequence RPRVKADLQRAPSRSSRPRGCANGS. Residues 231–454 form the Fibrinogen C-terminal domain; sequence CANGSKPRDC…FTEMKIRPQR (224 aa). A glycan (N-linked (GlcNAc...) asparagine) is linked at asparagine 233. Cysteine 240 and cysteine 269 are disulfide-bonded. An N-linked (GlcNAc...) asparagine glycan is attached at asparagine 336. Ca(2+)-binding residues include aspartate 389 and aspartate 391. Residues cysteine 397 and cysteine 410 are joined by a disulfide bond.

As to quaternary structure, homotetramer; disulfide-linked.

It is found in the membrane. Acetyl group-binding receptor which shows a calcium-dependent binding to acetylated structures such as chitin, some N-acetylated carbohydrates, and amino acids. In Xenopus tropicalis (Western clawed frog), this protein is Fibrinogen C domain-containing protein 1 (fibcd1).